A 341-amino-acid polypeptide reads, in one-letter code: Thymidine kinase (341 aa).

19–26 contacts ATP; sequence GAYGIGKT. The Proton acceptor role is filled by Glu-48. The substrate site is built by Tyr-66 and Gln-90. Arg-183 is a binding site for ATP. Arg-189 contacts substrate.

This sequence belongs to the herpesviridae thymidine kinase family. As to quaternary structure, homodimer.

The enzyme catalyses thymidine + ATP = dTMP + ADP + H(+). Catalyzes the transfer of the gamma-phospho group of ATP to thymidine to generate dTMP in the salvage pathway of pyrimidine synthesis. The dTMP serves as a substrate for DNA polymerase during viral DNA replication. Allows the virus to be reactivated and to grow in non-proliferative cells lacking a high concentration of phosphorylated nucleic acid precursors. The sequence is that of Thymidine kinase from Varicella-zoster virus (strain Dumas) (HHV-3).